Here is a 125-residue protein sequence, read N- to C-terminus: uncharacterized protein (125 aa).

2 helical membrane-spanning segments follow: residues 28 to 48 (VFIT…SQFC) and 54 to 74 (FFLP…LFFF).

It is found in the membrane. This is an uncharacterized protein from Saccharomyces cerevisiae (strain ATCC 204508 / S288c) (Baker's yeast).